A 132-amino-acid chain; its full sequence is Ribosome-binding factor A (132 aa).

It belongs to the RbfA family. As to quaternary structure, monomer. Binds 30S ribosomal subunits, but not 50S ribosomal subunits or 70S ribosomes.

It is found in the cytoplasm. One of several proteins that assist in the late maturation steps of the functional core of the 30S ribosomal subunit. Associates with free 30S ribosomal subunits (but not with 30S subunits that are part of 70S ribosomes or polysomes). Required for efficient processing of 16S rRNA. May interact with the 5'-terminal helix region of 16S rRNA. The sequence is that of Ribosome-binding factor A from Burkholderia cenocepacia (strain ATCC BAA-245 / DSM 16553 / LMG 16656 / NCTC 13227 / J2315 / CF5610) (Burkholderia cepacia (strain J2315)).